The chain runs to 89 residues: MALLDFFLSRKKQTANIAKERLQIIVAERRRGDSEPPYLPDLKRDILAVICKYIQIDPEMLHVQFEQKGDDISVLELNVTLPESEEVTK.

This sequence belongs to the MinE family.

Its function is as follows. Prevents the cell division inhibition by proteins MinC and MinD at internal division sites while permitting inhibition at polar sites. This ensures cell division at the proper site by restricting the formation of a division septum at the midpoint of the long axis of the cell. This Serratia proteamaculans (strain 568) protein is Cell division topological specificity factor.